The primary structure comprises 268 residues: MEKSNYHSNVNHHKRHMKQSGEKRAFLWAFIISFTVCTLFLGWRLVSVLEATQLPPIPATHTGSGTGVAENPEENTLATAKEQGDEQEWSLILVNRQNPIPAQYDVELEQLSNGERIDIRISPYLQDLFDAARADGVYPIVASGYRTTEKQQEIMDEKVAEYKAKGYTSAQAKAEAETWVAVPGTSEHQLGLAVDINADGIHSTGNEVYRWLDENSYRFGFIRRYPPDKTEITGVSNEPWHYRYVGIEAATKIYHQGLCLEEYLNTEK.

The helical transmembrane segment at 25–47 (AFLWAFIISFTVCTLFLGWRLVS) threads the bilayer. Substrate is bound by residues Q151, 179-181 (WVA), and S186. The Zn(2+) site is built by H188 and D195. Catalysis depends on E238, which acts as the Proton donor/acceptor. Residue H241 coordinates Zn(2+).

The protein belongs to the peptidase M15B family. In terms of assembly, monomer. The cofactor is Zn(2+).

Its subcellular location is the cell membrane. With respect to regulation, carboxypeptidase activity is insensitive to beta-lactams since it is not affected by penicillin G or ampicillin and is inhibited only by very high concentrations of cefalotin and cefoxitin. Carboxypeptidase that cleaves the C-terminal D-alanine residue from the peptidoglycan-derived pentapeptide L-Ala-gamma-D-Glu-L-Lys-D-Ala-D-Ala in vitro. Therefore, should contribute in vivo to the hydrolysis of the D-alanyl-D-alanine-containing peptidoglycan precursors. May increase the level of glycopeptide antibiotics resistance by decreasing the availability of D-Ala-D-Ala termini from the cell surface, which constitute the antibiotic target residues. This is D-alanyl-D-alanine carboxypeptidase from Enterococcus faecalis (strain ATCC 700802 / V583).